We begin with the raw amino-acid sequence, 597 residues long: Lipoprotein LpqB (597 aa).

Positions 1–28 (MTPGSRSAMRSRSVCGAIALAVLVTVSG) are cleaved as a signal peptide. Cys29 carries N-palmitoyl cysteine lipidation. A lipid anchor (S-diacylglycerol cysteine) is attached at Cys29. Residues 39-51 (QAIGTINRDSPGS) are compositionally biased toward polar residues. The segment at 39-59 (QAIGTINRDSPGSSVAAPAPG) is disordered.

This sequence belongs to the LpqB lipoprotein family.

It is found in the cell membrane. This is Lipoprotein LpqB from Rhodococcus opacus (strain B4).